A 427-amino-acid polypeptide reads, in one-letter code: Synaptotagmin-A (427 aa).

The Vesicular portion of the chain corresponds to M1–K57. N-linked (GlcNAc...) asparagine glycosylation occurs at N26. A helical transmembrane segment spans residues I58–C84. The Cytoplasmic segment spans residues K85–K427. The interval K96–D145 is disordered. Residues K109–K124 show a composition bias toward basic and acidic residues. The phospholipid binding stretch occupies residues E141–N387. C2 domains lie at K147–R266 and K278–H411. The Ca(2+) site is built by L177, D178, D184, D236, F237, D238, S241, K242, D244, D309, D315, D369, D371, and D377.

The protein belongs to the synaptotagmin family. Homodimer or homotrimer (possible). Ca(2+) serves as cofactor. Forebrain, cerebellum and neuroendocrine cells.

Its subcellular location is the cytoplasmic vesicle. It is found in the secretory vesicle. It localises to the synaptic vesicle membrane. The protein localises to the synapse. May have a regulatory role in the membrane interactions during trafficking of synaptic vesicles at the active zone of the synapse. It binds acidic phospholipids with a specificity that requires the presence of both an acidic head group and a diacyl backbone. This is Synaptotagmin-A (P65-A) from Diplobatis ommata (Ocellated electric ray).